We begin with the raw amino-acid sequence, 112 residues long: Nitrogen regulatory protein P-II 1 (112 aa).

The residue at position 51 (Y51) is an O-UMP-tyrosine.

The protein belongs to the P(II) protein family. As to quaternary structure, homotrimer. Post-translationally, uridylylated/deuridylylated by GlnD.

Functionally, P-II indirectly controls the transcription of the glutamine synthetase gene (GlnA). P-II prevents NR-II-catalyzed conversion of NR-I to NR-I-phosphate, the transcriptional activator of GlnA. When P-II is uridylylated to P-II-UMP, these events are reversed. When the ratio of Gln to 2-ketoglutarate decreases, P-II is uridylylated to P-II-UMP, which causes the deadenylation of glutamine synthetase by GlnE, so activating the enzyme. The chain is Nitrogen regulatory protein P-II 1 (glnB) from Escherichia coli O157:H7.